The following is a 189-amino-acid chain: Peptidyl-tRNA hydrolase (189 aa).

Tyrosine 14 provides a ligand contact to tRNA. The active-site Proton acceptor is the histidine 19. TRNA contacts are provided by tyrosine 64, asparagine 66, and asparagine 112.

The protein belongs to the PTH family. Monomer.

It localises to the cytoplasm. It catalyses the reaction an N-acyl-L-alpha-aminoacyl-tRNA + H2O = an N-acyl-L-amino acid + a tRNA + H(+). In terms of biological role, hydrolyzes ribosome-free peptidyl-tRNAs (with 1 or more amino acids incorporated), which drop off the ribosome during protein synthesis, or as a result of ribosome stalling. Functionally, catalyzes the release of premature peptidyl moieties from peptidyl-tRNA molecules trapped in stalled 50S ribosomal subunits, and thus maintains levels of free tRNAs and 50S ribosomes. In Clostridium botulinum (strain Okra / Type B1), this protein is Peptidyl-tRNA hydrolase.